Here is a 431-residue protein sequence, read N- to C-terminus: MVRLEKNDPLMLARQLPIKSVALILAGGRGTRLKDLTIKRAKPAVHFGGKFRIIDFALSNCINSGIRRIGVITQYQSHTLVQHIQRGWSFFSEEMNEFVDLLPAQQRVHGENWYRGTADAVTQNLDIIRRYKAEYVVILAGDHIYKQDYSRMLIDHVEKGARCTVACMPVPIEEASAFGVMAVDENEKIIEFVEKPANPPAMPTDPTKSLASMGIYIFDAAYLYELLEEDDRNENSSHDFGKDIIPKITEAGMAYAHPFPLSCVQSDPNAEPYWRDVGTLEAYWKANLDLASVTPELDMYDQNWPIRTHMESLPPAKFVQDRSGSHGMTLNSLVSGGCIISGSVVVQSVLFPRVRVNSFCNIDSAVLLPDVWVGRSCRLRRCVIDRACVIPEGMVIGENAEEDARRFYRSEEGIVLVTRDMLRKLGHKQER.

Lysine 39 is a beta-D-fructose 1,6-bisphosphate binding site. The AMP site is built by arginine 40, histidine 46, and arginine 52. Position 114 (tyrosine 114) interacts with alpha-D-glucose 1-phosphate. Residue arginine 130 coordinates AMP. Alpha-D-glucose 1-phosphate is bound by residues glycine 179, 194-195, and serine 212; that span reads EK. Residue arginine 386 participates in AMP binding. Position 429 to 431 (429 to 431) interacts with beta-D-fructose 1,6-bisphosphate; that stretch reads QER.

Belongs to the bacterial/plant glucose-1-phosphate adenylyltransferase family. Homotetramer.

The enzyme catalyses alpha-D-glucose 1-phosphate + ATP + H(+) = ADP-alpha-D-glucose + diphosphate. It participates in glycan biosynthesis; glycogen biosynthesis. Allosterically activated by fructose-1,6-bisphosphate (F16BP) and inhibited by AMP. Involved in the biosynthesis of ADP-glucose, a building block required for the elongation reactions to produce glycogen. Catalyzes the reaction between ATP and alpha-D-glucose 1-phosphate (G1P) to produce pyrophosphate and ADP-Glc. In Klebsiella pneumoniae (strain 342), this protein is Glucose-1-phosphate adenylyltransferase.